The primary structure comprises 139 residues: Large ribosomal subunit protein uL22 (139 aa).

Residues 1 to 21 form a disordered region; sequence MTAPEQTYRNKKQRKQQHKLR. Positions 9 to 21 are enriched in basic residues; that stretch reads RNKKQRKQQHKLR.

The protein belongs to the universal ribosomal protein uL22 family. In terms of assembly, part of the 50S ribosomal subunit.

In terms of biological role, this protein binds specifically to 23S rRNA; its binding is stimulated by other ribosomal proteins, e.g. L4, L17, and L20. It is important during the early stages of 50S assembly. It makes multiple contacts with different domains of the 23S rRNA in the assembled 50S subunit and ribosome. The globular domain of the protein is located near the polypeptide exit tunnel on the outside of the subunit, while an extended beta-hairpin is found that lines the wall of the exit tunnel in the center of the 70S ribosome. The chain is Large ribosomal subunit protein uL22 from Deinococcus geothermalis (strain DSM 11300 / CIP 105573 / AG-3a).